We begin with the raw amino-acid sequence, 294 residues long: Survival motor neuron protein (294 aa).

Positions 1–10 (MAMSSGGSGS) are enriched in gly residues. The segment at 1 to 32 (MAMSSGGSGSGVPEQEDAVLFRRGTGQSDDSD) is disordered. An N-acetylalanine modification is found at Ala2. Ser4, Ser5, and Ser8 each carry phosphoserine; by PKA. The tract at residues 13–44 (PEQEDAVLFRRGTGQSDDSDIWDDTALIKAYD) is P1 (binding site for GEMIN2). Thr25 carries the phosphothreonine modification. Phosphoserine is present on residues Ser28 and Ser31. Lys51 is covalently cross-linked (Glycyl lysine isopeptide (Lys-Gly) (interchain with G-Cter in SUMO2)). Positions 60-88 (CETSGKSKTTPKRKPAKKNKSQKKNTAAS) are disordered. Basic residues predominate over residues 68 to 82 (TTPKRKPAKKNKSQK). Residue Thr69 is modified to Phosphothreonine. Thr85 carries the phosphothreonine; by PKA modification. The Tudor domain maps to 91 to 151 (QWKVGDKCSA…LSPICEVANN (61 aa)). The tract at residues 97-209 (KCSAIWSEDG…MPGPRLGPGK (113 aa)) is required for interaction with RPP20/POP7. Residues 156 to 166 (AQENENESQVS) are compositionally biased toward low complexity. The disordered stretch occupies residues 156–222 (AQENENESQV…KFNGPPPPPP (67 aa)). Ser187 bears the Phosphoserine; by PKA mark. Positions 194-204 (LPPPPPMPGPR) are enriched in pro residues. A compositionally biased stretch (low complexity) spans 206 to 215 (GPGKPGLKFN). Residue Lys209 forms a Glycyl lysine isopeptide (Lys-Gly) (interchain with G-Cter in SUMO2) linkage. Positions 240–267 (PPIIPPPPPICPDSLDDADALGSMLISW) are P2 (binding site for SM B). Residues 279–294 (GFRQNQKEGRCSHSLN) form a required for interaction with SYNCRIP region.

This sequence belongs to the SMN family. Homooligomer; may form higher order homooligomers in the dimer to octamer range. Part of the core SMN complex that contains SMN1, GEMIN2/SIP1, DDX20/GEMIN3, GEMIN4, GEMIN5, GEMIN6, GEMIN7, GEMIN8 and STRAP/UNRIP. Part of the SMN-Sm complex that contains SMN1, GEMIN2/SIP1, DDX20/GEMIN3, GEMIN4, GEMIN5, GEMIN6, GEMIN7, GEMIN8, STRAP/UNRIP and the Sm proteins SNRPB, SNRPD1, SNRPD2, SNRPD3, SNRPE, SNRPF and SNRPG. Component of an import snRNP complex composed of KPNB1, RNUT1, SMN1 and ZNF259. Interacts with DDX20, FBL, NOLA1, RNUT1, SYNCRIP and with several spliceosomal snRNP core Sm proteins, including SNRPB, SNRPD1, SNRPD2, SNRPD3, SNRPE and ILF3. Interacts with GEMIN2; the interaction is direct. Interacts with GEMIN3; the interaction is direct. Interacts with GEMIN8; the interaction is direct. Interacts with SNRPB; the interaction is direct. Interacts (via Tudor domain) with SNRPD1 (via C-terminus); the interaction is direct. Interacts with SNRPD2; the interaction is direct. Interacts (via Tudor domain) with SNRPD3 (via C-terminus); the interaction is direct. Interacts with SNRPE; the interaction is direct. Interacts with OSTF1, LSM10, LSM11 and RPP20/POP7. Interacts (via C-terminal region) with ZPR1 (via C-terminal region). Interacts (via Tudor domain) with COIL. Interacts with SETX; recruits SETX to POLR2A. Interacts with POLR2A (via the C-terminal domain (CTD)). Interacts with PRMT5. Interacts with XRN2. Interacts (via C-terminus) with FMR1 (via C-terminus); the interaction is direct and occurs in a RNA-independent manner. Interacts (via Tudor domain) with SF3B2 ('Arg-508'-methylated form). Interacts with WRAP53/TCAB1. Interacts (via Tudor domain) with ELAVL4 in an RNA-independent manner; the interaction is required for localization of ELAVL4 to RNA granules. Interacts with FRG1.

It is found in the nucleus. Its subcellular location is the gem. The protein resides in the cajal body. The protein localises to the cytoplasm. It localises to the cytoplasmic granule. It is found in the perikaryon. Its subcellular location is the cell projection. The protein resides in the neuron projection. The protein localises to the axon. It localises to the myofibril. It is found in the sarcomere. Its subcellular location is the z line. In terms of biological role, the SMN complex catalyzes the assembly of small nuclear ribonucleoproteins (snRNPs), the building blocks of the spliceosome, and thereby plays an important role in the splicing of cellular pre-mRNAs. Most spliceosomal snRNPs contain a common set of Sm proteins SNRPB, SNRPD1, SNRPD2, SNRPD3, SNRPE, SNRPF and SNRPG that assemble in a heptameric protein ring on the Sm site of the small nuclear RNA to form the core snRNP (Sm core). In the cytosol, the Sm proteins SNRPD1, SNRPD2, SNRPE, SNRPF and SNRPG are trapped in an inactive 6S pICln-Sm complex by the chaperone CLNS1A that controls the assembly of the core snRNP. To assemble core snRNPs, the SMN complex accepts the trapped 5Sm proteins from CLNS1A forming an intermediate. Binding of snRNA inside 5Sm ultimately triggers eviction of the SMN complex, thereby allowing binding of SNRPD3 and SNRPB to complete assembly of the core snRNP. Within the SMN complex, SMN1 acts as a structural backbone and together with GEMIN2 it gathers the Sm complex subunits. Ensures the correct splicing of U12 intron-containing genes that may be important for normal motor and proprioceptive neurons development. Also required for resolving RNA-DNA hybrids created by RNA polymerase II, that form R-loop in transcription terminal regions, an important step in proper transcription termination. May also play a role in the metabolism of small nucleolar ribonucleoprotein (snoRNPs). The protein is Survival motor neuron protein (SMN1) of Pongo abelii (Sumatran orangutan).